A 455-amino-acid chain; its full sequence is Putative PTS system EIIBC component YbbF (455 aa).

The region spanning H8–A90 is the PTS EIIB type-1 domain. The Phosphocysteine intermediate; for EIIB activity role is filled by C30. The 340-residue stretch at R116–D455 folds into the PTS EIIC type-1 domain. A run of 10 helical transmembrane segments spans residues I118 to I138, I154 to G174, F181 to A201, L210 to T230, V250 to I270, I281 to V301, L325 to V345, A355 to V375, Y399 to L419, and I423 to A443.

Its subcellular location is the cell membrane. Its function is as follows. The phosphoenolpyruvate-dependent sugar phosphotransferase system (sugar PTS), a major carbohydrate active -transport system, catalyzes the phosphorylation of incoming sugar substrates concomitantly with their translocation across the cell membrane. The protein is Putative PTS system EIIBC component YbbF (ybbF) of Bacillus subtilis (strain 168).